The sequence spans 130 residues: Protein Wnt-9 (130 aa).

A lipid anchor (O-palmitoleoyl serine; by PORCN) is attached at S1. The segment at 41-69 (AGERTIARSRRRPREQRGQRRPKVSDGAL) is disordered. Residues 47 to 62 (ARSRRRPREQRGQRRP) are compositionally biased toward basic residues. A glycan (N-linked (GlcNAc...) asparagine) is linked at N97. A disulfide bridge links C100 with C111.

Belongs to the Wnt family. Post-translationally, palmitoleoylation is required for efficient binding to frizzled receptors. Depalmitoleoylation leads to Wnt signaling pathway inhibition.

It localises to the secreted. Its subcellular location is the extracellular space. The protein localises to the extracellular matrix. Its function is as follows. Ligand for members of the frizzled family of seven transmembrane receptors. Probable developmental protein. May be a signaling molecule which affects the development of discrete regions of tissues. Is likely to signal over only few cell diameters. This chain is Protein Wnt-9 (WNT-9), found in Eptatretus stoutii (Pacific hagfish).